The chain runs to 529 residues: BAR/IMD domain-containing adapter protein 2-like 2 (529 aa).

The 239-residue stretch at 1 to 239 (MAPEMDQFYR…HSPGLLGPAL (239 aa)) folds into the IMD domain. Disordered stretches follow at residues 221–327 (EASR…GGAR) and 403–510 (TSMS…TNPF). Residues S231, S272, and S302 each carry the phosphoserine modification. Residues 299-313 (SASSLYSGSAQSSRS) are compositionally biased toward low complexity. Residues 324-387 (GGARRVRALV…PEAYVKALEE (64 aa)) enclose the SH3 domain. 2 stretches are compositionally biased toward low complexity: residues 403–413 (TSMSPMTPMNP) and 452–462 (RSRTPSRVPSR). The segment covering 463-472 (APSPAPPPLP) has biased composition (pro residues). Phosphoserine occurs at positions 478 and 481.

In terms of tissue distribution, expressed in the epithelial layer of the intestine (at protein level).

The protein localises to the cell membrane. It is found in the cell junction. It localises to the cytoplasmic vesicle membrane. Functionally, phosphoinositides-binding protein that induces the formation of planar or gently curved membrane structures. Binds to phosphoinositides, including to phosphatidylinositol 4,5-bisphosphate (PtdIns(4,5)P2) headgroups. There seems to be no clear preference for a specific phosphoinositide. The polypeptide is BAR/IMD domain-containing adapter protein 2-like 2 (BAIAP2L2) (Homo sapiens (Human)).